We begin with the raw amino-acid sequence, 362 residues long: Phospho-N-acetylmuramoyl-pentapeptide-transferase (362 aa).

10 helical membrane passes run 18–38 (VFGY…AISL), 73–93 (TMGG…WGDL), 97–117 (YVWV…VDDW), 134–154 (YFWT…SATT), 160–180 (LIVP…FIAL), 200–220 (GLAI…AYVA), 237–257 (AGEL…FLWF), 264–284 (VFMG…IAVV), 289–309 (IVLF…MVQV), and 339–359 (QVVV…LSTL).

The protein belongs to the glycosyltransferase 4 family. MraY subfamily. Requires Mg(2+) as cofactor.

It is found in the cell inner membrane. The catalysed reaction is UDP-N-acetyl-alpha-D-muramoyl-L-alanyl-gamma-D-glutamyl-meso-2,6-diaminopimeloyl-D-alanyl-D-alanine + di-trans,octa-cis-undecaprenyl phosphate = di-trans,octa-cis-undecaprenyl diphospho-N-acetyl-alpha-D-muramoyl-L-alanyl-D-glutamyl-meso-2,6-diaminopimeloyl-D-alanyl-D-alanine + UMP. It functions in the pathway cell wall biogenesis; peptidoglycan biosynthesis. Catalyzes the initial step of the lipid cycle reactions in the biosynthesis of the cell wall peptidoglycan: transfers peptidoglycan precursor phospho-MurNAc-pentapeptide from UDP-MurNAc-pentapeptide onto the lipid carrier undecaprenyl phosphate, yielding undecaprenyl-pyrophosphoryl-MurNAc-pentapeptide, known as lipid I. The chain is Phospho-N-acetylmuramoyl-pentapeptide-transferase from Azoarcus sp. (strain BH72).